Consider the following 329-residue polypeptide: GTP 3',8-cyclase (329 aa).

Residues 8–234 (AFARKFYYLR…QIRQRSDGPA (227 aa)) enclose the Radical SAM core domain. Arg17 is a GTP binding site. Cys24 and Cys28 together coordinate [4Fe-4S] cluster. Tyr30 lines the S-adenosyl-L-methionine pocket. Cys31 provides a ligand contact to [4Fe-4S] cluster. Arg68 lines the GTP pocket. Gly72 provides a ligand contact to S-adenosyl-L-methionine. Position 99 (Thr99) interacts with GTP. Ser123 is a binding site for S-adenosyl-L-methionine. Lys160 contributes to the GTP binding site. Met194 lines the S-adenosyl-L-methionine pocket. [4Fe-4S] cluster contacts are provided by Cys257 and Cys260. 262–264 (RLR) serves as a coordination point for GTP. A [4Fe-4S] cluster-binding site is contributed by Cys274.

It belongs to the radical SAM superfamily. MoaA family. As to quaternary structure, monomer and homodimer. Requires [4Fe-4S] cluster as cofactor.

It carries out the reaction GTP + AH2 + S-adenosyl-L-methionine = (8S)-3',8-cyclo-7,8-dihydroguanosine 5'-triphosphate + 5'-deoxyadenosine + L-methionine + A + H(+). It participates in cofactor biosynthesis; molybdopterin biosynthesis. Functionally, catalyzes the cyclization of GTP to (8S)-3',8-cyclo-7,8-dihydroguanosine 5'-triphosphate. In Klebsiella pneumoniae subsp. pneumoniae (strain ATCC 700721 / MGH 78578), this protein is GTP 3',8-cyclase.